The chain runs to 340 residues: GTP 3',8-cyclase (340 aa).

Positions 20–246 constitute a Radical SAM core domain; sequence RFERQYVYLR…PKALSDGPAK (227 aa). A GTP-binding site is contributed by R29. Residues C36 and C40 each coordinate [4Fe-4S] cluster. Y42 is a binding site for S-adenosyl-L-methionine. Position 43 (C43) interacts with [4Fe-4S] cluster. R79 serves as a coordination point for GTP. An S-adenosyl-L-methionine-binding site is contributed by G83. T110 is a GTP binding site. Position 134 (S134) interacts with S-adenosyl-L-methionine. K171 serves as a coordination point for GTP. M205 is an S-adenosyl-L-methionine binding site. Residues C268 and C271 each coordinate [4Fe-4S] cluster. A GTP-binding site is contributed by 273-275; it reads RLR. Residue C285 participates in [4Fe-4S] cluster binding.

Belongs to the radical SAM superfamily. MoaA family. As to quaternary structure, monomer and homodimer. It depends on [4Fe-4S] cluster as a cofactor.

It catalyses the reaction GTP + AH2 + S-adenosyl-L-methionine = (8S)-3',8-cyclo-7,8-dihydroguanosine 5'-triphosphate + 5'-deoxyadenosine + L-methionine + A + H(+). Its pathway is cofactor biosynthesis; molybdopterin biosynthesis. Its function is as follows. Catalyzes the cyclization of GTP to (8S)-3',8-cyclo-7,8-dihydroguanosine 5'-triphosphate. The polypeptide is GTP 3',8-cyclase (Actinobacillus pleuropneumoniae serotype 5b (strain L20)).